The sequence spans 678 residues: Penicillin-binding protein activator LpoA (678 aa).

Residues 1–26 form the signal peptide; it reads MVPSTFSRLKAARCLPVVLAALIFAG. Residue Cys-27 is the site of N-palmitoyl cysteine attachment. A lipid anchor (S-diacylglycerol cysteine) is attached at Cys-27. A compositionally biased stretch (low complexity) spans 300-310; it reads AADVAEQPQPQ. 2 disordered regions span residues 300 to 340 and 496 to 528; these read AADV…PVSA and ALTG…DDQF. Polar residues predominate over residues 311–327; that stretch reads TADSVASPAQASVSDLT. Composition is skewed to low complexity over residues 330–340 and 513–528; these read QPAAQPVPVSA and TTNN…DDQF.

It belongs to the LpoA family. Interacts with PBP1a.

It is found in the cell outer membrane. Functionally, regulator of peptidoglycan synthesis that is essential for the function of penicillin-binding protein 1A (PBP1a). The protein is Penicillin-binding protein activator LpoA of Shigella flexneri serotype X (strain 2002017).